A 509-amino-acid polypeptide reads, in one-letter code: Metal transporter Nramp3 (509 aa).

The span at 1-12 (MPQLENNEPLLI) shows a compositional bias: low complexity. The tract at residues 1 to 25 (MPQLENNEPLLINEEEEEETAYDET) is disordered. The segment covering 13–23 (NEEEEEETAYD) has biased composition (acidic residues). The next 12 membrane-spanning stretches (helical) occupy residues 56–76 (LWLF…PGNL), 84–104 (AVAG…GLLV), 133–153 (MVLW…EVIG), 165–185 (ILPL…FLFL), 193–213 (LEAV…WMFG), 239–259 (AVGV…SALV), 285–305 (IALF…AKGF), 327–347 (YGGG…AAGQ), 383–403 (IIPT…LDVL), 406–426 (WLNV…LCLV), 444–464 (IAWL…LEFF), and 472–492 (VYTG…LYLI).

The protein belongs to the NRAMP (TC 2.A.55) family. As to expression, expressed in vascular tissues.

It is found in the vacuole membrane. Its function is as follows. Vacuolar metal transporter involved in intracellular metal homeostasis. Can transport iron (Fe), manganese (Mn) and cadmium (Cd). Regulates metal accumulation under Fe starvation. Acts redundantly with NRAMP4 to mobilize vacuolar Fe and provide sufficient Fe during seed germination. In association with NRAMP4, required for optimal growth and photosynthesis under Mn deficiency. Exports Mn from vacuoles in leaf mesophyll cells, making Mn available for functional photosystem II in chloroplasts. Involved in basal resistance to the bacterial pathogen E.chrysanthemi. In Arabidopsis thaliana (Mouse-ear cress), this protein is Metal transporter Nramp3 (NRAMP3).